A 1256-amino-acid polypeptide reads, in one-letter code: MSVSDIETERTRYYDAYDADDAELDGFIVSDEENDNLENENRNERDPDSRNQDDVDEYGQPQIDRIRTMTEALAPNESQASKVLRAHISVLVSALGGPDHTSNISPPPYKLGHDALACLKDIKRWIKSVDDRQDSYQVALACAESGLVINDLIVILCQWDSKNKKKEDFRNKRTMEKIMLACLELLVLLTWSVELRPESSDKQKLLYYDVKKAQIKYKRAILTYNKGQTLKAVIRLVLPIISKERVDREPKDNAIMRLVLFFFRNILYVEPPSPSISKKSSKTIVVTDNMPEGVSYDDISLSATISAFSKNRVLMLFLTLSSGIGVDFDSRFLGPTLLECIHLLVRGVDPNDILKLKQMRIPTEINDPGNSSSPFHNVPPASSTTGLQLQDLLAKESKIKNSQTQSMSTRHGRFGSLLSIRGDHSMSFVVSGQEALINAGQTMQKLDRSKKWKNRSYFKYDSDEYTKSSNTTYMNYGGLVILHEFIESFLAGGCFNILIEKLSSVFSSSDSILEKEYETATFFLTIAWFFQYKREKTVLYSSGTTNLQPIGEEDDRNDFGSVGAALSQVNFILLVKYCVDSFSISPKRWSSLHVVLICLKELLEISNTLFTRSSSSAGDEEQNELDRELAEGIISHLLVTQDFLSILYHLPQTASRHSPEYLKVCISVVHILLKTLKNFAEEDVKLFIQTTRRNSKKKANKESNDQSDAVEQVDESDTEDKRTHARVTRERKINYERTEVKFFHQDTVSTYIEYLSRYEDLTHYEIKKCLTYFHRLFVVRKDFNGLYRLDFMQVLHKLRDYLPSQSNIRGQVDEFIYYFMKKFKASIERFPNPIEILFPRFEDAESKTYLATGELYIQTEREIRSANVKRFEPGKPLEFVRHFEDNEKYKILVSALYEQGLSNMLVCLVEDLQRIHGIKQLDEDVDEVLQLKEDFRQYVLTNSHLRLLLRTVGLIPGYSLSQECQVPSKLTSSDIDSAITLIKKWMGLQPATFEDGKDPSYFLRSTGDTVDRPIDYSDSEDDIAFEITPKDRPNESHYDMLTELDELERAISGAENREKGKARKRGNKSSSTIKKKSLQSRSRRPPRFNVDSDDESELRKEVKSSEFVHDSDDESDDEAFFEREERLRQMLNSSGGIVNAQQLSEFKKVWASLESTGGIATASQVVRAVESVANISDGVDTHSHQDDKSQPSDSENEDSSEEVSEVQIRKRLRIEDDENDSDNNVSENYVSAEEGEEATPTVKRKKRLVISDDEDE.

Acidic residues predominate over residues 26-38 (GFIVSDEENDNLE). Disordered regions lie at residues 26–58 (GFIV…VDEY), 695–725 (SKKK…RTHA), 1052–1121 (SGAE…EAFF), and 1176–1256 (SDGV…DEDE). The span at 39-53 (NENRNERDPDSRNQD) shows a compositional bias: basic and acidic residues. A compositionally biased stretch (basic residues) spans 1060-1086 (GKARKRGNKSSSTIKKKSLQSRSRRPP). Basic and acidic residues-rich tracts occupy residues 1097 to 1110 (ELRK…FVHD) and 1179 to 1190 (VDTHSHQDDKSQ). Residues 1194–1204 (SENEDSSEEVS) show a composition bias toward acidic residues. Residues 1222–1231 (DNNVSENYVS) show a composition bias toward low complexity.

It belongs to the timeless family. Component of the fork protection complex (FPC) consisting of TOF1 and CSM3.

It localises to the nucleus. Forms a fork protection complex (FPC) with CSM3 and which is required for chromosome segregation during meiosis and DNA damage repair. FPC coordinates leading and lagging strand synthesis and moves with the replication fork. FPC stabilizes replication forks in a configuration that is recognized by replication checkpoint sensors. The polypeptide is Topoisomerase 1-associated factor 1 (TOF1) (Scheffersomyces stipitis (strain ATCC 58785 / CBS 6054 / NBRC 10063 / NRRL Y-11545) (Yeast)).